A 141-amino-acid polypeptide reads, in one-letter code: uncharacterized protein (141 aa).

The protein resides in the cytoplasm. This is an uncharacterized protein from Homo sapiens (Human).